We begin with the raw amino-acid sequence, 1005 residues long: Isoleucine--tRNA ligase (1005 aa).

Positions 70–80 (PYANGNIHIGH) match the 'HIGH' region motif. Residue glutamate 629 participates in L-isoleucyl-5'-AMP binding. A 'KMSKS' region motif is present at residues 670 to 674 (KMSKS). ATP is bound at residue lysine 673.

This sequence belongs to the class-I aminoacyl-tRNA synthetase family. IleS type 1 subfamily. In terms of assembly, monomer.

The protein localises to the cytoplasm. It carries out the reaction tRNA(Ile) + L-isoleucine + ATP = L-isoleucyl-tRNA(Ile) + AMP + diphosphate. Its function is as follows. Catalyzes the attachment of isoleucine to tRNA(Ile). As IleRS can inadvertently accommodate and process structurally similar amino acids such as valine, to avoid such errors it has two additional distinct tRNA(Ile)-dependent editing activities. One activity is designated as 'pretransfer' editing and involves the hydrolysis of activated Val-AMP. The other activity is designated 'posttransfer' editing and involves deacylation of mischarged Val-tRNA(Ile). This Rhodopseudomonas palustris (strain ATCC BAA-98 / CGA009) protein is Isoleucine--tRNA ligase.